We begin with the raw amino-acid sequence, 248 residues long: Geranylgeranylglyceryl phosphate synthase (248 aa).

D25 and S50 together coordinate Mg(2+). Sn-glycerol 1-phosphate-binding positions include 170–176 (YLEAGSG), 201–202 (GG), and 223–224 (GT).

It belongs to the GGGP/HepGP synthase family. Group II subfamily. It depends on Mg(2+) as a cofactor.

It localises to the cytoplasm. It carries out the reaction sn-glycerol 1-phosphate + (2E,6E,10E)-geranylgeranyl diphosphate = sn-3-O-(geranylgeranyl)glycerol 1-phosphate + diphosphate. Its pathway is membrane lipid metabolism; glycerophospholipid metabolism. Functionally, prenyltransferase that catalyzes the transfer of the geranylgeranyl moiety of geranylgeranyl diphosphate (GGPP) to the C3 hydroxyl of sn-glycerol-1-phosphate (G1P). This reaction is the first ether-bond-formation step in the biosynthesis of archaeal membrane lipids. This chain is Geranylgeranylglyceryl phosphate synthase, found in Methanococcus aeolicus (strain ATCC BAA-1280 / DSM 17508 / OCM 812 / Nankai-3).